The following is a 221-amino-acid chain: Phosphoglycolate phosphatase (221 aa).

D10 (nucleophile) is an active-site residue. Mg(2+)-binding residues include D10, D12, and D168.

The protein belongs to the HAD-like hydrolase superfamily. CbbY/CbbZ/Gph/YieH family. It depends on Mg(2+) as a cofactor.

The catalysed reaction is 2-phosphoglycolate + H2O = glycolate + phosphate. Its pathway is organic acid metabolism; glycolate biosynthesis; glycolate from 2-phosphoglycolate: step 1/1. Its function is as follows. Specifically catalyzes the dephosphorylation of 2-phosphoglycolate. Is involved in the dissimilation of the intracellular 2-phosphoglycolate formed during the DNA repair of 3'-phosphoglycolate ends, a major class of DNA lesions induced by oxidative stress. In Xanthomonas campestris pv. campestris (strain 8004), this protein is Phosphoglycolate phosphatase.